Reading from the N-terminus, the 764-residue chain is Polyribonucleotide nucleotidyltransferase (764 aa).

Positions 555 and 561 each coordinate Mg(2+). The KH domain maps to 621–680 (PHITSINIPQNKIGEVIGPKGKTINQITEETGANITIEDDGTVFISAVGGESAREAEEKI). Residues 692–761 (GDRFLGTVVK…NRGKISLVLV (70 aa)) enclose the S1 motif domain.

The protein belongs to the polyribonucleotide nucleotidyltransferase family. Mg(2+) serves as cofactor.

The protein localises to the cytoplasm. It carries out the reaction RNA(n+1) + phosphate = RNA(n) + a ribonucleoside 5'-diphosphate. Functionally, involved in mRNA degradation. Catalyzes the phosphorolysis of single-stranded polyribonucleotides processively in the 3'- to 5'-direction. The sequence is that of Polyribonucleotide nucleotidyltransferase from Corynebacterium jeikeium (strain K411).